Consider the following 174-residue polypeptide: Shikimate kinase (174 aa).

15-20 contributes to the ATP binding site; the sequence is GTGKST. Ser19 is a binding site for Mg(2+). Substrate-binding residues include Asp37, Arg61, and Gly82. Residue Arg120 coordinates ATP. A substrate-binding site is contributed by Arg138.

Belongs to the shikimate kinase family. As to quaternary structure, monomer. Requires Mg(2+) as cofactor.

The protein localises to the cytoplasm. The enzyme catalyses shikimate + ATP = 3-phosphoshikimate + ADP + H(+). It functions in the pathway metabolic intermediate biosynthesis; chorismate biosynthesis; chorismate from D-erythrose 4-phosphate and phosphoenolpyruvate: step 5/7. Functionally, catalyzes the specific phosphorylation of the 3-hydroxyl group of shikimic acid using ATP as a cosubstrate. The sequence is that of Shikimate kinase from Staphylococcus aureus (strain NCTC 8325 / PS 47).